A 160-amino-acid chain; its full sequence is Putative pre-16S rRNA nuclease (160 aa).

This sequence belongs to the YqgF nuclease family.

The protein localises to the cytoplasm. Functionally, could be a nuclease involved in processing of the 5'-end of pre-16S rRNA. The protein is Putative pre-16S rRNA nuclease of Cereibacter sphaeroides (strain ATCC 17025 / ATH 2.4.3) (Rhodobacter sphaeroides).